We begin with the raw amino-acid sequence, 248 residues long: Granzyme E (248 aa).

The signal sequence occupies residues 1 to 18 (MPPVLILLTLLLPLGAGA). Positions 19-20 (EE) are excised as a propeptide. The region spanning 21–246 (IIGGHVVKPH…FLPWISRNMK (226 aa)) is the Peptidase S1 domain. Cys-50 and Cys-66 are disulfide-bonded. The Charge relay system role is filled by His-65. N-linked (GlcNAc...) asparagine glycans are attached at residues Asn-68 and Asn-102. Catalysis depends on Asp-109, which acts as the Charge relay system. 2 disulfide bridges follow: Cys-143/Cys-210 and Cys-175/Cys-189. An N-linked (GlcNAc...) asparagine glycan is attached at Asn-154. Ser-204 serves as the catalytic Charge relay system. Asn-223 is a glycosylation site (N-linked (GlcNAc...) asparagine).

Belongs to the peptidase S1 family. Granzyme subfamily.

It is found in the cytolytic granule. In terms of biological role, this enzyme is probably necessary for target cell lysis in cell-mediated immune responses. The chain is Granzyme E (Gzme) from Mus musculus (Mouse).